The following is a 158-amino-acid chain: Transcription elongation factor GreA (158 aa).

Residues 24–43 (DVERPKASEAIGEARDKGDL) show a composition bias toward basic and acidic residues. Residues 24–47 (DVERPKASEAIGEARDKGDLSENA) are disordered. Residues 48 to 68 (EYDAAKEAQGLLEMKISKMEE) are a coiled coil.

It belongs to the GreA/GreB family.

Functionally, necessary for efficient RNA polymerase transcription elongation past template-encoded arresting sites. The arresting sites in DNA have the property of trapping a certain fraction of elongating RNA polymerases that pass through, resulting in locked ternary complexes. Cleavage of the nascent transcript by cleavage factors such as GreA or GreB allows the resumption of elongation from the new 3'terminus. GreA releases sequences of 2 to 3 nucleotides. The sequence is that of Transcription elongation factor GreA from Christiangramia forsetii (strain DSM 17595 / CGMCC 1.15422 / KT0803) (Gramella forsetii).